A 324-amino-acid polypeptide reads, in one-letter code: Glutathione synthetase (324 aa).

One can recognise an ATP-grasp domain in the interval 129 to 313; the sequence is KLYALHFPDL…LEDEIVDWLV (185 aa). 155-211 serves as a coordination point for ATP; sequence VDIHGRAVIKPLDGKGGEGIFLLARADRNLNAIIEASTAYGTRHVMVQRYLEESRQG. Residues glutamate 284 and asparagine 286 each contribute to the Mg(2+) site.

The protein belongs to the prokaryotic GSH synthase family. It depends on Mg(2+) as a cofactor. Requires Mn(2+) as cofactor.

It catalyses the reaction gamma-L-glutamyl-L-cysteine + glycine + ATP = glutathione + ADP + phosphate + H(+). It functions in the pathway sulfur metabolism; glutathione biosynthesis; glutathione from L-cysteine and L-glutamate: step 2/2. This chain is Glutathione synthetase, found in Gloeobacter violaceus (strain ATCC 29082 / PCC 7421).